Here is a 274-residue protein sequence, read N- to C-terminus: Cytochrome b-c1 complex subunit Rieske, mitochondrial (274 aa).

Residues 79-110 (SHTDVKVPDFSDYRRAEVLDSTKSSKESSEAR) are Mitochondrial matrix-facing. A helical membrane pass occupies residues 111-137 (KGFSYLVTATTTVGVAYAAKNVVSQFV). Topologically, residues 138–274 (SSMSASADVL…FTSDDVVVVG (137 aa)) are mitochondrial intermembrane. A Rieske domain is found at 187–272 (EAAVEVSQLR…YEFTSDDVVV (86 aa)). [2Fe-2S] cluster is bound by residues Cys-217, His-219, Cys-236, His-239, and Ser-241. An intrachain disulfide couples Cys-222 to Cys-238.

This sequence belongs to the Rieske iron-sulfur protein family. In terms of assembly, component of the ubiquinol-cytochrome c oxidoreductase (cytochrome b-c1 complex, complex III, CIII), a multisubunit enzyme composed of 11 subunits. The complex is composed of 3 respiratory subunits cytochrome b, cytochrome c1 and Rieske protein UQCRFS1, 2 core protein subunits UQCRC1/QCR1 and UQCRC2/QCR2, and 6 low-molecular weight protein subunits UQCRH/QCR6, UQCRB/QCR7, UQCRQ/QCR8, UQCR10/QCR9, UQCR11/QCR10 and subunit 9, the cleavage product of Rieske protein UQCRFS1. The complex exists as an obligatory dimer and forms supercomplexes (SCs) in the inner mitochondrial membrane with NADH-ubiquinone oxidoreductase (complex I, CI) and cytochrome c oxidase (complex IV, CIV), resulting in different assemblies (supercomplex SCI(1)III(2)IV(1) and megacomplex MCI(2)III(2)IV(2)). Incorporation of the Rieske protein UQCRFS1 is the penultimate step in complex III assembly. Interacts with TTC19, which is involved in the clearance of UQCRFS1 fragments. As to quaternary structure, component of the ubiquinol-cytochrome c oxidoreductase (cytochrome b-c1 complex, complex III, CIII). Subunit 9 corresponds to the mitochondrial targeting sequence (MTS) of Rieske protein UQCRFS1. It is retained after processing and incorporated inside complex III, where it remains bound to the complex and localizes between the 2 core subunits UQCRC1/QCR1 and UQCRC2/QCR2. [2Fe-2S] cluster serves as cofactor. In terms of processing, proteolytic processing is necessary for the correct insertion of UQCRFS1 in the complex III dimer. Several fragments are generated during UQCRFS1 insertion, most probably due to the endogenous matrix-processing peptidase (MPP) activity of the 2 core protein subunits UQCRC1/QCR1 and UQCRC2/QCR2, which are homologous to the 2 mitochondrial-processing peptidase (MPP) subunits beta-MPP and alpha-MPP respectively. The action of the protease is also necessary for the clearance of the UQCRFS1 fragments.

It localises to the mitochondrion inner membrane. It carries out the reaction a quinol + 2 Fe(III)-[cytochrome c](out) = a quinone + 2 Fe(II)-[cytochrome c](out) + 2 H(+)(out). In terms of biological role, component of the ubiquinol-cytochrome c oxidoreductase, a multisubunit transmembrane complex that is part of the mitochondrial electron transport chain which drives oxidative phosphorylation. The respiratory chain contains 3 multisubunit complexes succinate dehydrogenase (complex II, CII), ubiquinol-cytochrome c oxidoreductase (cytochrome b-c1 complex, complex III, CIII) and cytochrome c oxidase (complex IV, CIV), that cooperate to transfer electrons derived from NADH and succinate to molecular oxygen, creating an electrochemical gradient over the inner membrane that drives transmembrane transport and the ATP synthase. The cytochrome b-c1 complex catalyzes electron transfer from ubiquinol to cytochrome c, linking this redox reaction to translocation of protons across the mitochondrial inner membrane, with protons being carried across the membrane as hydrogens on the quinol. In the process called Q cycle, 2 protons are consumed from the matrix, 4 protons are released into the intermembrane space and 2 electrons are passed to cytochrome c. The Rieske protein is a catalytic core subunit containing a [2Fe-2S] iron-sulfur cluster. It cycles between 2 conformational states during catalysis to transfer electrons from the quinol bound in the Q(0) site in cytochrome b to cytochrome c1. Incorporation of UQCRFS1 is the penultimate step in complex III assembly. Functionally, component of the ubiquinol-cytochrome c oxidoreductase (cytochrome b-c1 complex, complex III, CIII). UQCRFS1 undergoes proteolytic processing once it is incorporated in the complex III dimer. One of the fragments, called subunit 9, corresponds to its mitochondrial targeting sequence (MTS). The proteolytic processing is necessary for the correct insertion of UQCRFS1 in the complex III dimer, but the persistence of UQCRFS1-derived fragments may prevent newly imported UQCRFS1 to be processed and assembled into complex III and is detrimental for the complex III structure and function. In Mus musculus (Mouse), this protein is Cytochrome b-c1 complex subunit Rieske, mitochondrial.